Reading from the N-terminus, the 201-residue chain is FMN-dependent NADH:quinone oxidoreductase (201 aa).

FMN is bound by residues S9 and 16-18 (SYS).

This sequence belongs to the azoreductase type 1 family. In terms of assembly, homodimer. It depends on FMN as a cofactor.

The enzyme catalyses 2 a quinone + NADH + H(+) = 2 a 1,4-benzosemiquinone + NAD(+). The catalysed reaction is N,N-dimethyl-1,4-phenylenediamine + anthranilate + 2 NAD(+) = 2-(4-dimethylaminophenyl)diazenylbenzoate + 2 NADH + 2 H(+). In terms of biological role, quinone reductase that provides resistance to thiol-specific stress caused by electrophilic quinones. Functionally, also exhibits azoreductase activity. Catalyzes the reductive cleavage of the azo bond in aromatic azo compounds to the corresponding amines. This chain is FMN-dependent NADH:quinone oxidoreductase, found in Mesomycoplasma hyopneumoniae (strain 7448) (Mycoplasma hyopneumoniae).